A 439-amino-acid polypeptide reads, in one-letter code: F-box/FBD/LRR-repeat protein At5g56570 (439 aa).

An F-box domain is found at 35–81 (PTELSDMPDDLIFKIFSFLPFFKEDLATRFISEYGKGLWNPDPNAIF). LRR repeat units follow at residues 155 to 177 (CTTLKVLVLDHLNIMSVPGWFRL) and 223 to 246 (VPTLRSLSIDNKRRGHVPLGSFWI). The region spanning 361–411 (VWEKPTVVPECLSTRLEILKWRDYEGTEHEKDMVGYILANATFLQRATFST) is the FBD domain.

The polypeptide is F-box/FBD/LRR-repeat protein At5g56570 (Arabidopsis thaliana (Mouse-ear cress)).